Reading from the N-terminus, the 418-residue chain is Bifunctional enzyme IspD/IspF (418 aa).

Residues Met-1–Phe-261 form a 2-C-methyl-D-erythritol 4-phosphate cytidylyltransferase region. The segment at Arg-262–Ile-418 is 2-C-methyl-D-erythritol 2,4-cyclodiphosphate synthase. A divalent metal cation-binding residues include Asp-268 and His-270. 4-CDP-2-C-methyl-D-erythritol 2-phosphate is bound by residues Asp-268 to His-270 and His-294 to Ser-295. Position 302 (His-302) interacts with a divalent metal cation. Residues Asp-316 to Gly-318 and Phe-321 to Asp-325 contribute to the 4-CDP-2-C-methyl-D-erythritol 2-phosphate site.

It in the N-terminal section; belongs to the IspD/TarI cytidylyltransferase family. IspD subfamily. In the C-terminal section; belongs to the IspF family. A divalent metal cation serves as cofactor.

The enzyme catalyses 2-C-methyl-D-erythritol 4-phosphate + CTP + H(+) = 4-CDP-2-C-methyl-D-erythritol + diphosphate. It catalyses the reaction 4-CDP-2-C-methyl-D-erythritol 2-phosphate = 2-C-methyl-D-erythritol 2,4-cyclic diphosphate + CMP. It participates in isoprenoid biosynthesis; isopentenyl diphosphate biosynthesis via DXP pathway; isopentenyl diphosphate from 1-deoxy-D-xylulose 5-phosphate: step 2/6. It functions in the pathway isoprenoid biosynthesis; isopentenyl diphosphate biosynthesis via DXP pathway; isopentenyl diphosphate from 1-deoxy-D-xylulose 5-phosphate: step 4/6. In terms of biological role, bifunctional enzyme that catalyzes the formation of 4-diphosphocytidyl-2-C-methyl-D-erythritol from CTP and 2-C-methyl-D-erythritol 4-phosphate (MEP) (IspD), and catalyzes the conversion of 4-diphosphocytidyl-2-C-methyl-D-erythritol 2-phosphate (CDP-ME2P) to 2-C-methyl-D-erythritol 2,4-cyclodiphosphate (ME-CPP) with a corresponding release of cytidine 5-monophosphate (CMP) (IspF). The chain is Bifunctional enzyme IspD/IspF from Albidiferax ferrireducens (strain ATCC BAA-621 / DSM 15236 / T118) (Rhodoferax ferrireducens).